Reading from the N-terminus, the 154-residue chain is uncharacterized protein (154 aa).

A helical transmembrane segment spans residues 23-43 (SAVALVTFAGAALSGVIPAIA).

Its subcellular location is the membrane. This is an uncharacterized protein from Mycobacterium tuberculosis (strain CDC 1551 / Oshkosh).